A 156-amino-acid polypeptide reads, in one-letter code: Small ribosomal subunit protein uS7 (156 aa).

Belongs to the universal ribosomal protein uS7 family. As to quaternary structure, part of the 30S ribosomal subunit. Contacts proteins S9 and S11.

One of the primary rRNA binding proteins, it binds directly to 16S rRNA where it nucleates assembly of the head domain of the 30S subunit. Is located at the subunit interface close to the decoding center, probably blocks exit of the E-site tRNA. The protein is Small ribosomal subunit protein uS7 of Pseudomonas syringae pv. syringae (strain B728a).